The following is a 1365-amino-acid chain: Homeotic protein spalt-major (1365 aa).

Disordered regions lie at residues 47–194 (SADK…EVTL), 270–298 (QAKQ…EEEE), and 322–363 (LINA…NTHK). Low complexity-rich tracts occupy residues 63–76 (SPLT…SPSR) and 87–99 (EQST…PEQS). The span at 103-117 (HQLENDIKSEAKSEI) shows a compositional bias: basic and acidic residues. A compositionally biased stretch (low complexity) spans 146–157 (PSSPVAEASAEE). The span at 159–181 (ATERTPEKEKEKDVEVDVEKPDE) shows a compositional bias: basic and acidic residues. Acidic residues predominate over residues 275 to 298 (EDTEEDADQEQDQEQETDTYEEEE). The segment covering 346 to 363 (HDHESQPNRRPSLDNTHK) has biased composition (basic and acidic residues). 2 consecutive C2H2-type zinc fingers follow at residues 451–473 (HRCR…IRSH) and 479–501 (FKCN…FQRH). Disordered regions lie at residues 508–554 (VPMN…ASFP) and 586–716 (ELPT…TPGQ). Polar residues predominate over residues 530–539 (MSPTDSSPNH). A compositionally biased stretch (pro residues) spans 540–554 (SPAPPPLGSAPASFP). 2 stretches are compositionally biased toward basic and acidic residues: residues 603 to 622 (PQVK…HEQE) and 638 to 662 (VRIK…EPRR). Phosphoserine is present on residues S739 and S744. The disordered stretch occupies residues 740 to 772 (PEHHSPVRSPAGGALPPGVPPPPHHHPHHMARS). C2H2-type zinc fingers lie at residues 824–846 (NQCV…YRTH), 852–874 (FKCR…MAVH), and 884–906 (HQCP…IRLH). Disordered stretches follow at residues 948–1012 (ALPG…RSGD), 1030–1129 (VVNT…ILTS), and 1146–1241 (HHLQ…GARP). The span at 976–991 (DMDDNMDCGEDYDDDV) shows a compositional bias: acidic residues. The segment covering 1040 to 1054 (SSASSHGHSVGSTSA) has biased composition (low complexity). Polar residues predominate over residues 1055–1079 (PTSPSVHASSQVIKRSSSPARSEAS). A phosphoserine mark is found at S1076 and S1079. 3 stretches are compositionally biased toward low complexity: residues 1085-1100 (LTPR…SRSP), 1114-1123 (RSPSGSSHAS), and 1146-1168 (HHLQ…AAAA). Residues 1181–1191 (QHQEQLRREAA) are compositionally biased toward basic and acidic residues. The segment covering 1192–1218 (EAQQKAAAAAAAAAAAAAAQRQTPPQA) has biased composition (low complexity). 2 C2H2-type zinc fingers span residues 1289 to 1311 (TTCG…YRSH) and 1317 to 1339 (FKCS…MLTH).

Belongs to the sal C2H2-type zinc-finger protein family.

It localises to the nucleus. Functionally, required for the establishment of the posterior-most head and the anterior-most tail segments of the embryo. Probably function as a transcriptional regulator. Could repress the transcription of the tsh gene. In Drosophila melanogaster (Fruit fly), this protein is Homeotic protein spalt-major (salm).